Consider the following 451-residue polypeptide: Protein tweety homolog 1-B (451 aa).

The Extracellular portion of the chain corresponds to 1-43 (MSTSHGYRASWWTYILHQVPHTNFQFEVVDNQFAPQEWSYQQA). A helical membrane pass occupies residues 44–64 (LLFLASIAGLCLAISLVLICV). The Cytoplasmic segment spans residues 65-86 (YLIKFCCCASQEDDDSKSHRVC). Residues 87–107 (CVTWSCVAAVIICCAGIGIGF) form a helical membrane-spanning segment. Over 108 to 214 (YGNSETNDGV…QVNFIEDYRW (107 aa)) the chain is Extracellular. An N-linked (GlcNAc...) asparagine glycan is attached at N128. Residues 215-235 (LAYILLLLLDLIICLFTLLSL) traverse the membrane as a helical segment. At 236 to 240 (AKQIK) the chain is on the cytoplasmic side. The chain crosses the membrane as a helical span at residues 241–261 (WLVIVMTVVSFFVLLLSWGSM). Residues 262 to 390 (GLEMATAVGL…LKGLCYDGME (129 aa)) are Extracellular-facing. Disulfide bonds link C275-C385 and C303-C370. Residues N284 and N355 are each glycosylated (N-linked (GlcNAc...) asparagine). The chain crosses the membrane as a helical span at residues 391–411 (GILFLLLFSFLSALSFTAAVC). The Cytoplasmic portion of the chain corresponds to 412 to 451 (SLPRAWKRFRNRDLDYDDMDEDDPFNPQESKRFVQWQSSI).

This sequence belongs to the tweety family. In terms of assembly, homotetramer; disulfide-linked. Homodimer.

Its subcellular location is the cell membrane. It carries out the reaction chloride(in) = chloride(out). It catalyses the reaction L-glutamate(out) = L-glutamate(in). In terms of biological role, may act as a calcium-independent, swelling-dependent volume-regulated anion channel (VRAC-swell) which plays a pivotal role in the process of regulatory volume decrease (RVD) in the brain through the efflux of anions like chloride and organic osmolytes like glutamate. This is Protein tweety homolog 1-B (ttyh1-b) from Xenopus laevis (African clawed frog).